Consider the following 877-residue polypeptide: MQLKDGGTGMSRRRKHADSPARRSTPHRAAAKNCRPAAEPWLRESRAACSSQLRRAGTRSARRAQRQAAADGGRSPRGKETPVQIVKMDLLSCTFSSPNDPDGQTDIFWDQNSPMTKQLGKGRKKQISSAYSDEISHIVNRIAPQDEKPVTNSMLGVWIGETAIPCTPGVAKEKSRVKASCTKLKTKNREKELMKLAQQFDKNMEELDVIQEQDGKNHDFIQMTSKMGHLDNHKDSVQKPSGDVVPEITCTPVKKQMKGDSRISLAKAQDSSQKPFDQNVEAAFNAIFDGSTQMCSGQLSQDLLDAFLNNSKTSLRKKNALLQEEIITTETLLTENLLNKTPISLSPQIDTTVILNSCVTPCPKTPAAPDTQLDELTANDFEDDWESLLGSEPFLMENAEMLEFVPSTTAQDTCQKAICTSVGENDTITSRTNMNLGGRLRDSKVTLDLPSKTRNGELRNAGEHRFSSHPGDESRKVPFTGNKVSFEKSVTSIVSKDEDYVAVSNLEKVKEDSRNKCILNKHSSNKSSSYTRYPSKQSSELGVNLPLQVPTTDPFDSVFLGKENIVCSTNQSHGSKLNSSFDDWNDPLLASEMVEACHRLEATWDAGEVDDDLFCQACDDIERLTQQENKGSEESESVSYTSTRGSRSSSTASKQASQSAPSKHWNVVSSAVPLSLANKSQMSKPVTVQKRGRCGDGPNILDATNLSVCSKNSSDNKRGPVQVNSSKFVLGGSSNLNVNLGLMSTKIATNMKLSTQQLSHNSLADTAQNDNKILKLPKFTFKKKNPQLNQNHLVGSVPVGKISEDLGKRETVNSLLEANQQQSSINYSESLKPSSPDEEERNRKYSPEEIQRKRQEALVRRKAKALHTVQSAPISLP.

A disordered region spans residues 1-82; it reads MQLKDGGTGM…GRSPRGKETP (82 aa). The segment covering 56–65 has biased composition (basic residues); sequence AGTRSARRAQ. A Glycyl lysine isopeptide (Lys-Gly) (interchain with G-Cter in SUMO2) cross-link involves residue Lys87. The short motif at 107–113 is the ATR-activation domain (AAD) element; it reads IFWDQNS. Coiled coils occupy residues 185–213 and 306–335; these read KTKN…IQEQ and AFLN…LLTE. Glycyl lysine isopeptide (Lys-Gly) (interchain with G-Cter in SUMO2) cross-links involve residues Lys416 and Lys444. Residues 450-479 are disordered; sequence PSKTRNGELRNAGEHRFSSHPGDESRKVPF. Positions 454–476 are enriched in basic and acidic residues; that stretch reads RNGELRNAGEHRFSSHPGDESRK. Phosphoserine is present on Ser467. A Glycyl lysine isopeptide (Lys-Gly) (interchain with G-Cter in SUMO2) cross-link involves residue Lys510. The RBM1 motif motif lies at 607–622; sequence GEVDDDLFCQACDDIE. Disordered regions lie at residues 626-664 and 818-877; these read QQEN…PSKH and ANQQ…ISLP. A compositionally biased stretch (low complexity) spans 637 to 662; that stretch reads SVSYTSTRGSRSSSTASKQASQSAPS. The segment covering 818-833 has biased composition (polar residues); the sequence is ANQQQSSINYSESLKP. Basic and acidic residues predominate over residues 840-859; it reads ERNRKYSPEEIQRKRQEALV. The RBM2 motif signature appears at 843 to 865; sequence RKYSPEEIQRKRQEALVRRKAKA. Polar residues predominate over residues 868–877; sequence TVQSAPISLP.

As to quaternary structure, interacts (via RBM1 motif) with RPA1. Interacts (via RBM2 motif) with RPA2. Interacts (via the ATR-activation domain motif) with ATR. Phosphorylated by ATR.

Its subcellular location is the nucleus. Functionally, replication stress response protein that accumulates at DNA damage sites and promotes replication fork progression and integrity. Recruited to stalled replication forks via interaction with the RPA complex and directly stimulates ATR kinase activity independently of TOPBP1. Probably only regulates a subset of ATR targets. This Mus musculus (Mouse) protein is Ewing's tumor-associated antigen 1 homolog.